Consider the following 348-residue polypeptide: NADH-ubiquinone oxidoreductase chain 2 (348 aa).

11 consecutive transmembrane segments (helical) span residues Pro-3–Gly-23, His-25–Ile-45, Ser-67–Leu-87, Ala-95–Leu-115, Val-118–Pro-138, Leu-149–Asn-171, Ile-178–Pro-198, Leu-203–Asn-223, Leu-240–Phe-260, Asp-274–Leu-294, and Leu-324–Phe-344.

Belongs to the complex I subunit 2 family.

It localises to the mitochondrion inner membrane. The catalysed reaction is a ubiquinone + NADH + 5 H(+)(in) = a ubiquinol + NAD(+) + 4 H(+)(out). Functionally, core subunit of the mitochondrial membrane respiratory chain NADH dehydrogenase (Complex I) that is believed to belong to the minimal assembly required for catalysis. Complex I functions in the transfer of electrons from NADH to the respiratory chain. The immediate electron acceptor for the enzyme is believed to be ubiquinone. In Squalus acanthias (Spiny dogfish), this protein is NADH-ubiquinone oxidoreductase chain 2 (MT-ND2).